A 355-amino-acid chain; its full sequence is Peptide chain release factor 1 (355 aa).

Glutamine 232 is subject to N5-methylglutamine.

The protein belongs to the prokaryotic/mitochondrial release factor family. Post-translationally, methylated by PrmC. Methylation increases the termination efficiency of RF1.

It localises to the cytoplasm. Peptide chain release factor 1 directs the termination of translation in response to the peptide chain termination codons UAG and UAA. The chain is Peptide chain release factor 1 from Thermobifida fusca (strain YX).